Reading from the N-terminus, the 565-residue chain is NAD-dependent malic enzyme (565 aa).

The active-site Proton donor is the Tyr104. NAD(+) is bound at residue Arg157. Lys175 acts as the Proton acceptor in catalysis. 3 residues coordinate a divalent metal cation: Glu246, Asp247, and Asp270. 2 residues coordinate NAD(+): Asp270 and Asn418.

The protein belongs to the malic enzymes family. As to quaternary structure, homotetramer. It depends on Mg(2+) as a cofactor. Mn(2+) serves as cofactor.

It carries out the reaction (S)-malate + NAD(+) = pyruvate + CO2 + NADH. The catalysed reaction is oxaloacetate + H(+) = pyruvate + CO2. This chain is NAD-dependent malic enzyme, found in Edwardsiella ictaluri (strain 93-146).